The primary structure comprises 358 residues: Methylthioribose-1-phosphate isomerase (358 aa).

Substrate contacts are provided by residues 54–56, Arg96, and Gln205; that span reads RGA. The active-site Proton donor is Asp246. Position 256–257 (256–257) interacts with substrate; it reads NK.

The protein belongs to the eIF-2B alpha/beta/delta subunits family. MtnA subfamily.

It carries out the reaction 5-(methylsulfanyl)-alpha-D-ribose 1-phosphate = 5-(methylsulfanyl)-D-ribulose 1-phosphate. It functions in the pathway amino-acid biosynthesis; L-methionine biosynthesis via salvage pathway; L-methionine from S-methyl-5-thio-alpha-D-ribose 1-phosphate: step 1/6. In terms of biological role, catalyzes the interconversion of methylthioribose-1-phosphate (MTR-1-P) into methylthioribulose-1-phosphate (MTRu-1-P). This is Methylthioribose-1-phosphate isomerase from Azotobacter vinelandii (strain DJ / ATCC BAA-1303).